The following is a 608-amino-acid chain: Ceramide kinase (608 aa).

In terms of domain architecture, DAGKc spans E160–K367. ATP-binding positions include H170–G174, T201, and G230–E236. Residue G229 to G232 participates in substrate binding. The Proton donor/acceptor role is filled by D231. Residues P254 to D280 are disordered. Over residues S255–V269 the composition is skewed to polar residues. An ATP-binding site is contributed by S329.

It depends on Ca(2+) as a cofactor.

It carries out the reaction an N-acylsphing-4-enine + ATP = an N-acylsphing-4-enine 1-phosphate + ADP + H(+). Its function is as follows. Catalyzes specifically the phosphorylation of ceramide to form ceramide 1-phosphate. Possesses high activity on ceramide analogs (C6, C8 synthetic ceramides) and lower activity on C6 and C8 dihydroceramides. Has weak activity on natural ceramides (a mixture of ceramides from bovine brain) and the synthetic substrate C2 ceramide. Has very poor activity on diacylglycerol and sphingosine. Ceramide is a critical sphingolipid metabolite that induces programmed cell death (PCD) in plants and ceramide-1-phosphate has a PCD suppressive effect. Thus, ceramide phosphorylation plays a role in the modulation of PCD and CERK activity is crucial for the maintenance of cell viability. The sequence is that of Ceramide kinase (CERK) from Arabidopsis thaliana (Mouse-ear cress).